The sequence spans 381 residues: Protein pelota homolog (381 aa).

It belongs to the eukaryotic release factor 1 family. Pelota subfamily. Component of the Pelota-HBS1L complex, also named Dom34-Hbs1 complex, composed of pelo-1 and hbs-1. It depends on a divalent metal cation as a cofactor.

Its subcellular location is the cytoplasm. The protein localises to the nucleus. Component of the Pelota-HBS1L complex, a complex that recognizes stalled ribosomes and triggers the No-Go Decay (NGD) pathway. In the Pelota-HBS1L complex, pelo-1 recognizes ribosomes stalled at the 3' end of an mRNA and engages stalled ribosomes by destabilizing mRNA in the mRNA channel. Following ribosome-binding, the Pelota-HBS1L complex promotes the disassembly of stalled ribosomes, followed by degradation of damaged mRNAs as part of the NGD pathway. The chain is Protein pelota homolog from Caenorhabditis elegans.